A 92-amino-acid polypeptide reads, in one-letter code: Putative regulatory protein CKL_1364 (92 aa).

Belongs to the RemA family.

This is Putative regulatory protein CKL_1364 from Clostridium kluyveri (strain ATCC 8527 / DSM 555 / NBRC 12016 / NCIMB 10680 / K1).